The primary structure comprises 237 residues: 2-C-methyl-D-erythritol 4-phosphate cytidylyltransferase (237 aa).

The protein belongs to the IspD/TarI cytidylyltransferase family. IspD subfamily.

It catalyses the reaction 2-C-methyl-D-erythritol 4-phosphate + CTP + H(+) = 4-CDP-2-C-methyl-D-erythritol + diphosphate. The protein operates within isoprenoid biosynthesis; isopentenyl diphosphate biosynthesis via DXP pathway; isopentenyl diphosphate from 1-deoxy-D-xylulose 5-phosphate: step 2/6. In terms of biological role, catalyzes the formation of 4-diphosphocytidyl-2-C-methyl-D-erythritol from CTP and 2-C-methyl-D-erythritol 4-phosphate (MEP). The chain is 2-C-methyl-D-erythritol 4-phosphate cytidylyltransferase from Vibrio vulnificus (strain CMCP6).